Here is a 2244-residue protein sequence, read N- to C-terminus: Multifunctional protein ura1 (2244 aa).

Positions 1-437 (MSGLLPSLSS…GPRDTEFLFD (437 aa)) are GATase (Glutamine amidotransferase). Residues 16–44 (QSEALGMPRTHGPKPSENDPKEPTCSPSP) form a disordered region. L-glutamine is bound by residues Ser101, Gly309, and Gly311. The Glutamine amidotransferase type-1 domain occupies 264–449 (RILVIDVGMK…IDVVKRSADA (186 aa)). Catalysis depends on Cys338, which acts as the Nucleophile; for GATase activity. L-glutamine is bound by residues Gln342, Asn380, Gly382, and Tyr383. Active-site for GATase activity residues include His422 and Glu424. The tract at residues 438–477 (VFIDVVKRSADAKSLQPFKLPGGTIEENRSRHPLVDAKRV) is linker. The segment at 478–1014 (LILGSGGLSI…VEHDIHFNDK (537 aa)) is CPSase A. The interval 478 to 1514 (LILGSGGLSI…TNVKCAKLMI (1037 aa)) is CPSase (Carbamoyl phosphate synthase). ATP is bound by residues Arg594, Arg634, Gly640, Gly641, Arg671, Met673, Glu678, Gly704, Ile705, His706, Gln747, and Glu761. An ATP-grasp 1 domain is found at 598–790 (ARAMDEINEK…LAFTAAKLGL (193 aa)). Gln747, Glu761, and Asn763 together coordinate Mg(2+). Residues Gln747, Glu761, and Asn763 each contribute to the Mn(2+) site. The segment at 1015–1514 (GVMVLGSGVY…TNVKCAKLMI (500 aa)) is CPSase B. The residue at position 1119 (Ser1119) is a Phosphoserine. In terms of domain architecture, ATP-grasp 2 spans 1133–1324 (SRMLDDIGVD…MISMATDVIM (192 aa)). ATP-binding residues include Arg1169, Lys1208, Ile1210, Glu1215, Gly1240, Val1241, His1242, Ser1243, Gln1283, and Glu1295. Residues Gln1283, Glu1295, and Asn1297 each coordinate Mg(2+). 3 residues coordinate Mn(2+): Gln1283, Glu1295, and Asn1297. Residues 1390–1552 (FRLPKKNILI…INISAFLPEF (163 aa)) form the MGS-like domain. Positions 1515–1524 (EAICRNLDFS) are linker. The tract at residues 1525–1853 (LSTVDFQSSF…FDGHDVFFDG (329 aa)) is defective DHOase domain. The interval 1854 to 1935 (ELNFEHTYGR…VQLINSSPFY (82 aa)) is linker. Residues Ser1881 and Ser1885 each carry the phosphoserine modification. An ATCase (Aspartate transcarbamylase) region spans residues 1936–2244 (RKHIISVHQV…CVMGATEVAN (309 aa)). Residues Arg1988 and Thr1989 each coordinate carbamoyl phosphate. Lys2016 is an L-aspartate binding site. Carbamoyl phosphate contacts are provided by Arg2037, His2065, and Gln2068. Arg2098 and Arg2160 together coordinate L-aspartate. Carbamoyl phosphate-binding residues include Leu2199 and Pro2200.

In the N-terminal section; belongs to the CarA family. This sequence in the 2nd section; belongs to the CarB family. The protein in the 3rd section; belongs to the metallo-dependent hydrolases superfamily. DHOase family. CAD subfamily. It in the C-terminal section; belongs to the aspartate/ornithine carbamoyltransferase superfamily. ATCase family. It depends on Mg(2+) as a cofactor. Mn(2+) serves as cofactor.

It catalyses the reaction hydrogencarbonate + L-glutamine + 2 ATP + H2O = carbamoyl phosphate + L-glutamate + 2 ADP + phosphate + 2 H(+). The enzyme catalyses L-glutamine + H2O = L-glutamate + NH4(+). It carries out the reaction hydrogencarbonate + NH4(+) + 2 ATP = carbamoyl phosphate + 2 ADP + phosphate + 2 H(+). The catalysed reaction is carbamoyl phosphate + L-aspartate = N-carbamoyl-L-aspartate + phosphate + H(+). The protein operates within pyrimidine metabolism; UMP biosynthesis via de novo pathway; (S)-dihydroorotate from bicarbonate: step 1/3. Its pathway is pyrimidine metabolism; UMP biosynthesis via de novo pathway; (S)-dihydroorotate from bicarbonate: step 2/3. Both CPSase and ATCase activities are feedback inhibited by the end product UTP. Its function is as follows. Multifunctional protein that encodes the first 2 enzymatic activities of the de novo pyrimidine pathway: carbamoylphosphate synthetase (CPSase; EC 6.3.5.5) and aspartate transcarbamylase (ATCase; EC 2.1.3.2). The CPSase-function is accomplished in 2 steps, by a glutamine-dependent amidotransferase activity (GATase) that binds and cleaves glutamine to produce ammonia, followed by an ammonium-dependent carbamoyl phosphate synthetase, which reacts with the ammonia, hydrogencarbonate and ATP to form carbamoyl phosphate. The endogenously produced carbamoyl phosphate is sequestered and channeled to the ATCase active site. ATCase then catalyzes the formation of carbamoyl-L-aspartate from L-aspartate and carbamoyl phosphate. The chain is Multifunctional protein ura1 (ura1) from Schizosaccharomyces pombe (strain 972 / ATCC 24843) (Fission yeast).